The primary structure comprises 530 residues: Alpha-(1,3)-fucosyltransferase 4 (530 aa).

Disordered regions lie at residues 1–48 and 66–113; these read MRRL…RAVP and HLGG…TPAD. Topologically, residues 1–147 are cytoplasmic; that stretch reads MRRLWGAARK…GGRRRWRRGR (147 aa). Residues 88-106 show a composition bias toward basic and acidic residues; the sequence is ASGERQRRLEPQLQHESRC. A helical; Signal-anchor for type II membrane protein transmembrane segment spans residues 148 to 172; it reads GLPWTVCVLAAAGLTCTALITYACW. Over 173 to 530 the chain is Lumenal; the sequence is GQLPPLPWAS…IRNLASWFER (358 aa). Residues Asn216 and Asn315 are each glycosylated (N-linked (GlcNAc...) asparagine).

This sequence belongs to the glycosyltransferase 10 family.

The protein resides in the golgi apparatus. It localises to the golgi stack membrane. It carries out the reaction a beta-D-galactosyl-(1-&gt;4)-N-acetyl-beta-D-glucosaminyl derivative + GDP-beta-L-fucose = a beta-D-galactosyl-(1-&gt;4)-[alpha-L-fucosyl-(1-&gt;3)]-N-acetyl-beta-D-glucosaminyl derivative + GDP + H(+). The catalysed reaction is an N-acetyl-alpha-neuraminyl-(2-&gt;3)-beta-D-galactosyl-(1-&gt;4)-N-acetyl-beta-D-glucosaminyl derivative + GDP-beta-L-fucose = an alpha-Neu5Ac-(2-&gt;3)-beta-D-Gal-(1-&gt;4)-[alpha-L-Fuc-(1-&gt;3)]-beta-D-GlcNAc derivative + GDP + H(+). It catalyses the reaction an alpha-Neu5Ac-(2-&gt;3)-beta-D-Gal-(1-&gt;4)-beta-D-GlcNAc-(1-&gt;3)-beta-D-Gal-(1-&gt;4)-beta-D-GlcNAc derivative + GDP-beta-L-fucose = an alpha-Neu5Ac-(2-&gt;3)-beta-D-Gal-(1-&gt;4)-beta-D-GlcNAc-(1-&gt;3)-beta-D-Gal-(1-&gt;4)-[alpha-L-Fuc-(1-&gt;3)]-beta-D-GlcNAc derivative + GDP + H(+). The enzyme catalyses an alpha-Neu5Ac-(2-&gt;3)-beta-D-Gal-(1-&gt;4)-beta-D-GlcNAc6S derivative + GDP-beta-L-fucose = an alpha-Neu5Ac-(2-&gt;3)-beta-D-Gal-(1-&gt;4)-[alpha-L-Fuc-(1-&gt;3)]-beta-D-GlcNAc6S derivative + GDP + H(+). The protein operates within protein modification; protein glycosylation. Catalyzes alpha(1-&gt;3) linkage of fucosyl moiety transferred from GDP-beta-L-fucose to N-acetyl glucosamine (GlcNAc) within type 2 lactosamine (LacNAc, Gal-beta(1-&gt;4)GlcNAc) glycan attached to N- or O-linked glycoproteins. Robustly fucosylates nonsialylated distal LacNAc unit of the polylactosamine chain to form Lewis X antigen (CD15), a glycan determinant known to mediate important cellular functions in development and immunity. Fucosylates with lower efficiency sialylated LacNAc acceptors to form sialyl Lewis X and 6-sulfo sialyl Lewis X determinants that serve as recognition epitopes for C-type lectins. Together with FUT7 contributes to SELE, SELL and SELP selectin ligand biosynthesis and selectin-dependent lymphocyte homing, leukocyte migration and blood leukocyte homeostasis. In a cell type specific manner, may also fucosylate the internal LacNAc unit of the polylactosamine chain to form VIM-2 antigen that serves as recognition epitope for SELE. This is Alpha-(1,3)-fucosyltransferase 4 (FUT4) from Pan troglodytes (Chimpanzee).